The following is a 415-amino-acid chain: Histidine--tRNA ligase (415 aa).

This sequence belongs to the class-II aminoacyl-tRNA synthetase family. In terms of assembly, homodimer.

The protein resides in the cytoplasm. The enzyme catalyses tRNA(His) + L-histidine + ATP = L-histidyl-tRNA(His) + AMP + diphosphate + H(+). This Phytoplasma australiense protein is Histidine--tRNA ligase.